Here is a 390-residue protein sequence, read N- to C-terminus: GTPase Obg (390 aa).

Residues 1–159 form the Obg domain; that stretch reads MKFVDEATIK…RELRLELLLL (159 aa). Positions 160-333 constitute an OBG-type G domain; it reads ADVGMLGLPN…LCDELADFMD (174 aa). Residues 166-173, 191-195, 213-216, 283-286, and 314-316 contribute to the GTP site; these read GLPNAGKS, FTTLI, DIPG, NKTD, and AAV. Mg(2+)-binding residues include serine 173 and threonine 193.

The protein belongs to the TRAFAC class OBG-HflX-like GTPase superfamily. OBG GTPase family. In terms of assembly, monomer. It depends on Mg(2+) as a cofactor.

The protein localises to the cytoplasm. Functionally, an essential GTPase which binds GTP, GDP and possibly (p)ppGpp with moderate affinity, with high nucleotide exchange rates and a fairly low GTP hydrolysis rate. Plays a role in control of the cell cycle, stress response, ribosome biogenesis and in those bacteria that undergo differentiation, in morphogenesis control. The protein is GTPase Obg of Aliivibrio fischeri (strain ATCC 700601 / ES114) (Vibrio fischeri).